A 308-amino-acid chain; its full sequence is Glycosyltransferase 6 domain-containing protein 1 (308 aa).

Over M1 to M6 the chain is Cytoplasmic. Residues L7–F23 traverse the membrane as a helical; Signal-anchor for type II membrane protein segment. The Lumenal segment spans residues R24–L308. N-linked (GlcNAc...) asparagine glycosylation occurs at N74. Residues F82–F87, A173–N175, and H195–W198 contribute to the substrate site. Catalysis depends on E263, which acts as the Nucleophile.

The protein belongs to the glycosyltransferase 6 family. It depends on Mn(2+) as a cofactor.

It localises to the membrane. The protein is Glycosyltransferase 6 domain-containing protein 1 (GLT6D1) of Macaca fascicularis (Crab-eating macaque).